Consider the following 290-residue polypeptide: Ribosomal RNA small subunit methyltransferase A (290 aa).

S-adenosyl-L-methionine-binding residues include N27, L29, G54, E75, D100, and N125.

It belongs to the class I-like SAM-binding methyltransferase superfamily. rRNA adenine N(6)-methyltransferase family. RsmA subfamily.

It is found in the cytoplasm. It catalyses the reaction adenosine(1518)/adenosine(1519) in 16S rRNA + 4 S-adenosyl-L-methionine = N(6)-dimethyladenosine(1518)/N(6)-dimethyladenosine(1519) in 16S rRNA + 4 S-adenosyl-L-homocysteine + 4 H(+). Its function is as follows. Specifically dimethylates two adjacent adenosines (A1518 and A1519) in the loop of a conserved hairpin near the 3'-end of 16S rRNA in the 30S particle. May play a critical role in biogenesis of 30S subunits. The chain is Ribosomal RNA small subunit methyltransferase A from Streptococcus uberis (strain ATCC BAA-854 / 0140J).